Consider the following 540-residue polypeptide: Zona pellucida sperm-binding protein 4 (540 aa).

The first 18 residues, 1 to 18 (MWLLRCVLLCVSLSLAVS), serve as a signal peptide directing secretion. Residues 19–505 (GQHKPEAPDY…EKLRVPVDSK (487 aa)) lie on the Extracellular side of the membrane. N69 is a glycosylation site (N-linked (GlcNAc...) asparagine). Residues 141 to 183 (DWCDSIPARDRLPCAPSPISRGDCEGLGCCYSSEEVNSCYYGN) enclose the P-type domain. The region spanning 188–466 (HCTREGHFSI…VTCPDLSRRR (279 aa)) is the ZP domain. 3 N-linked (GlcNAc...) asparagine glycosylation sites follow: N202, N219, and N267. T302 is a glycosylation site (O-linked (GalNAc...) threonine). A disulfide bond links C367 and C442. The propeptide at 463-540 (SRRRNFDNSS…QKSCPDQMCQ (78 aa)) is removed in mature form. N-linked (GlcNAc...) asparagine glycosylation is found at N470 and N474. A helical membrane pass occupies residues 506–526 (VLWVAGLSGTLILGALLVSYL). Residues 527–540 (AVKKQKSCPDQMCQ) lie on the Cytoplasmic side of the membrane.

The protein belongs to the ZP domain family. ZPB subfamily. Post-translationally, proteolytically cleaved before the transmembrane segment to yield the secreted ectodomain incorporated in the zona pellucida. In terms of tissue distribution, expressed in oocytes.

The protein resides in the zona pellucida. It localises to the cell membrane. Component of the zona pellucida, an extracellular matrix surrounding oocytes which mediates sperm binding, induction of the acrosome reaction and prevents post-fertilization polyspermy. The zona pellucida is composed of 3 to 4 glycoproteins, ZP1, ZP2, ZP3, and ZP4. ZP4 may act as a sperm receptor. The protein is Zona pellucida sperm-binding protein 4 (ZP4) of Homo sapiens (Human).